Here is a 420-residue protein sequence, read N- to C-terminus: UDP-N-acetylglucosamine 1-carboxyvinyltransferase (420 aa).

22–23 (KN) is a binding site for phosphoenolpyruvate. Arginine 92 is a binding site for UDP-N-acetyl-alpha-D-glucosamine. Residue cysteine 116 is the Proton donor of the active site. Cysteine 116 bears the 2-(S-cysteinyl)pyruvic acid O-phosphothioketal mark. Residues 121 to 125 (RPVDQ), aspartate 304, and isoleucine 326 each bind UDP-N-acetyl-alpha-D-glucosamine.

It belongs to the EPSP synthase family. MurA subfamily.

The protein resides in the cytoplasm. The enzyme catalyses phosphoenolpyruvate + UDP-N-acetyl-alpha-D-glucosamine = UDP-N-acetyl-3-O-(1-carboxyvinyl)-alpha-D-glucosamine + phosphate. Its pathway is cell wall biogenesis; peptidoglycan biosynthesis. Cell wall formation. Adds enolpyruvyl to UDP-N-acetylglucosamine. This chain is UDP-N-acetylglucosamine 1-carboxyvinyltransferase, found in Paraburkholderia phymatum (strain DSM 17167 / CIP 108236 / LMG 21445 / STM815) (Burkholderia phymatum).